Reading from the N-terminus, the 447-residue chain is Tubulin alpha chain (447 aa).

7 residues coordinate GTP: Q11, E71, G144, T145, T179, N206, and N228. Residue E71 coordinates Mg(2+). Residue E254 is part of the active site.

Belongs to the tubulin family. Dimer of alpha and beta chains. A typical microtubule is a hollow water-filled tube with an outer diameter of 25 nm and an inner diameter of 15 nM. Alpha-beta heterodimers associate head-to-tail to form protofilaments running lengthwise along the microtubule wall with the beta-tubulin subunit facing the microtubule plus end conferring a structural polarity. Microtubules usually have 13 protofilaments but different protofilament numbers can be found in some organisms and specialized cells. The cofactor is Mg(2+).

The protein localises to the cytoplasm. Its subcellular location is the cytoskeleton. The catalysed reaction is GTP + H2O = GDP + phosphate + H(+). Its function is as follows. Tubulin is the major constituent of microtubules, a cylinder consisting of laterally associated linear protofilaments composed of alpha- and beta-tubulin heterodimers. Microtubules grow by the addition of GTP-tubulin dimers to the microtubule end, where a stabilizing cap forms. Below the cap, tubulin dimers are in GDP-bound state, owing to GTPase activity of alpha-tubulin. The chain is Tubulin alpha chain (TUBA) from Avena sativa (Oat).